The sequence spans 98 residues: Integration host factor subunit beta (98 aa).

Belongs to the bacterial histone-like protein family. As to quaternary structure, heterodimer of an alpha and a beta chain.

Its function is as follows. This protein is one of the two subunits of integration host factor, a specific DNA-binding protein that functions in genetic recombination as well as in transcriptional and translational control. This Pseudomonas fluorescens (strain SBW25) protein is Integration host factor subunit beta.